We begin with the raw amino-acid sequence, 268 residues long: MGDQSIISALLLGIIEGLTEFIPVSSTAHVLLAGHFLGFKSPGNTFAVLIQLGAILAILLVYFQKLVSIAVAMPTSAKARRFVLAVLVAFLPAAVIGALAHDFIKTVLFETPMLICVVLIIGGFILLAVDRMPLKPKYTDIMDYPPSLAFKIGLFQCLAMIPGTSRSGATIVGALLMGTDKRSAAEFSFFLAMPTMLGAFVLDLYKNRDALSFDDSALIAVGFVAAFVSGLFVVRSLLDFVSRRGFAPFAWWRIVIGALGLVALLVIG.

Helical transmembrane passes span 5-25, 43-63, 84-104, 107-127, 184-204, 218-238, and 247-267; these read SIIS…IPVS, GNTF…LVYF, LAVL…HDFI, VLFE…FILL, AAEF…VLDL, LIAV…RSLL, and APFA…LLVI.

It belongs to the UppP family.

The protein resides in the cell inner membrane. The enzyme catalyses di-trans,octa-cis-undecaprenyl diphosphate + H2O = di-trans,octa-cis-undecaprenyl phosphate + phosphate + H(+). Functionally, catalyzes the dephosphorylation of undecaprenyl diphosphate (UPP). Confers resistance to bacitracin. This chain is Undecaprenyl-diphosphatase 1, found in Agrobacterium fabrum (strain C58 / ATCC 33970) (Agrobacterium tumefaciens (strain C58)).